The sequence spans 453 residues: BPI fold-containing family B member 6 (453 aa).

Residues 1–18 (MLRILCLALCSLLTGTRA) form the signal peptide. Asparagine 114 carries N-linked (GlcNAc...) asparagine glycosylation. The cysteines at positions 137 and 174 are disulfide-linked. Asparagine 190 carries N-linked (GlcNAc...) asparagine glycosylation.

It belongs to the BPI/LBP/Plunc superfamily. BPI/LBP family. In terms of tissue distribution, detected at very low levels in normal tonsils, and at higher levels in hypertrophic tonsils.

Its subcellular location is the secreted. The polypeptide is BPI fold-containing family B member 6 (BPIFB6) (Homo sapiens (Human)).